The primary structure comprises 104 residues: Glutaredoxin 1 (104 aa).

In terms of domain architecture, Glutaredoxin spans 1–96 (MNKSILHTII…KLLETQPKNK (96 aa)). A disulfide bond links C17 and C20.

Belongs to the glutaredoxin family. Monomer.

It localises to the cytoplasm. Has a glutathione-disulfide oxidoreductase activity in the presence of NADPH and glutathione reductase. Reduces low molecular weight disulfides and proteins. The polypeptide is Glutaredoxin 1 (grxC1) (Rickettsia typhi (strain ATCC VR-144 / Wilmington)).